Here is a 679-residue protein sequence, read N- to C-terminus: Glycine--tRNA ligase beta subunit (679 aa).

This sequence belongs to the class-II aminoacyl-tRNA synthetase family. As to quaternary structure, tetramer of two alpha and two beta subunits.

Its subcellular location is the cytoplasm. The enzyme catalyses tRNA(Gly) + glycine + ATP = glycyl-tRNA(Gly) + AMP + diphosphate. The protein is Glycine--tRNA ligase beta subunit (glyS) of Bacillus subtilis (strain 168).